Consider the following 158-residue polypeptide: SsrA-binding protein (158 aa).

Positions 133–158 (QLHDKRETEKKRDWNKEKGRLLRDKH) are disordered.

Belongs to the SmpB family.

It localises to the cytoplasm. Required for rescue of stalled ribosomes mediated by trans-translation. Binds to transfer-messenger RNA (tmRNA), required for stable association of tmRNA with ribosomes. tmRNA and SmpB together mimic tRNA shape, replacing the anticodon stem-loop with SmpB. tmRNA is encoded by the ssrA gene; the 2 termini fold to resemble tRNA(Ala) and it encodes a 'tag peptide', a short internal open reading frame. During trans-translation Ala-aminoacylated tmRNA acts like a tRNA, entering the A-site of stalled ribosomes, displacing the stalled mRNA. The ribosome then switches to translate the ORF on the tmRNA; the nascent peptide is terminated with the 'tag peptide' encoded by the tmRNA and targeted for degradation. The ribosome is freed to recommence translation, which seems to be the essential function of trans-translation. This is SsrA-binding protein from Beijerinckia indica subsp. indica (strain ATCC 9039 / DSM 1715 / NCIMB 8712).